Here is a 1133-residue protein sequence, read N- to C-terminus: Guanine nucleotide-binding protein G(s) subunit alpha isoforms XLas (1133 aa).

Disordered regions lie at residues 1–195 (MGMF…PEAL), 322–552 (DDTA…VPGA), 611–648 (SASA…WPDK), and 724–744 (RSRS…RKQM). A compositionally biased stretch (low complexity) spans 31–48 (LEAPGAAAPGAGAGPAEE). Positions 347–362 (DKSECAERPPVEREAA) are enriched in basic and acidic residues. Composition is skewed to low complexity over residues 391–404 (PEAM…AAQA), 459–471 (GGAA…TPAE), 482–498 (AEPA…ESAS), 515–525 (ATLAEPAARAA), and 535–552 (RAVP…VPGA). A compositionally biased stretch (pro residues) spans 633–643 (PPTPRPPPRPT). Over residues 732–744 (KAKDPMEERRKQM) the composition is skewed to basic and acidic residues. Positions 737 to 761 (MEERRKQMRKEAIEMREQKRADKKR) form a coiled coil. The 356-residue stretch at 778–1133 (CTHRLLLLGA…RMHLRQYELL (356 aa)) folds into the G-alpha domain. Positions 781 to 794 (RLLLLGAGESGKST) are G1 motif. Residue 786–794 (GAGESGKST) participates in GTP binding. Serine 793 provides a ligand contact to Mg(2+). The segment at 807-828 (FNGEGGEEDPQAARSNSDGEKA) is disordered. A G2 motif region spans residues 935-943 (DLLRCRVLT). GTP is bound by residues 936 to 943 (LLRCRVLT), 962 to 966 (DVGGQ), and 1031 to 1034 (NKQD). Arginine 940 is modified (ADP-ribosylarginine; by cholera toxin). A Mg(2+)-binding site is contributed by threonine 943. The interval 958-967 (FHMFDVGGQR) is G3 motif. Positions 1027-1034 (ILFLNKQD) are G4 motif. Serine 1091 bears the Phosphoserine mark. Residues 1103–1108 (TCAVDT) are G5 motif. A GTP-binding site is contributed by alanine 1105.

The protein belongs to the G-alpha family. G(s) subfamily. In terms of assembly, g proteins are composed of 3 units; alpha, beta and gamma. The alpha chain contains the guanine nucleotide binding site. Interacts through its N-terminal region with ALEX which is produced from the same locus in a different open reading frame. This interaction may inhibit its adenylyl cyclase-stimulating activity. Interacts with MAGED2.

The protein resides in the cell membrane. It is found in the apical cell membrane. It carries out the reaction GTP + H2O = GDP + phosphate + H(+). Functionally, guanine nucleotide-binding proteins (G proteins) function as transducers in numerous signaling pathways controlled by G protein-coupled receptors (GPCRs). The alpha chain contains the guanine nucleotide binding site and alternates between an active, GTP-bound state and an inactive, GDP-bound state. Signaling by an activated GPCR promotes GDP release and GTP binding. The alpha subunit has a low GTPase activity that converts bound GTP to GDP, thereby terminating the signal. Both GDP release and GTP hydrolysis are modulated by numerous regulatory proteins. Signaling involves the activation of adenylyl cyclases, resulting in increased levels of the signaling molecule cAMP. GNAS functions downstream of several GPCRs, including beta-adrenergic receptors. XLas isoforms interact with the same set of receptors as Gnas isoforms. In Mus musculus (Mouse), this protein is Guanine nucleotide-binding protein G(s) subunit alpha isoforms XLas.